The primary structure comprises 107 residues: Replication initiation control protein YabA (107 aa).

4 residues coordinate Zn(2+): histidine 81, cysteine 83, cysteine 97, and cysteine 100.

Belongs to the YabA family. In terms of assembly, homotetramer. Interacts with both DnaA and DnaN, acting as a bridge between these two proteins. It depends on Zn(2+) as a cofactor.

The protein resides in the cytoplasm. It is found in the nucleoid. Its function is as follows. Involved in control of chromosome replication initiation. Inhibits the cooperative binding of DnaA to the oriC region, thus negatively regulating initiation of chromosome replication. Inhibits the ability of DnaA-ATP to form a helix on DNA; does not disassemble preformed DnaA-DNA helices. Decreases the residence time of DnaA on the chromosome at its binding sites (oriC, replication forks and promoter-binding sites). Tethers DnaA to the replication machinery via the DNA polymerase beta sliding clamp subunit (dnaN). Associates with oriC and other DnaA targets on the chromosome in a DnaA-dependent manner. The chain is Replication initiation control protein YabA from Streptococcus pyogenes serotype M18 (strain MGAS8232).